The primary structure comprises 247 residues: tRNA uridine(34) hydroxylase (247 aa).

In terms of domain architecture, Rhodanese spans 124 to 218 (TKQDVIVIDT…YLEDTQNKNN (95 aa)). The Cysteine persulfide intermediate role is filled by cysteine 178.

The protein belongs to the TrhO family.

The enzyme catalyses uridine(34) in tRNA + AH2 + O2 = 5-hydroxyuridine(34) in tRNA + A + H2O. Catalyzes oxygen-dependent 5-hydroxyuridine (ho5U) modification at position 34 in tRNAs. The sequence is that of tRNA uridine(34) hydroxylase from Rickettsia rickettsii (strain Iowa).